A 380-amino-acid polypeptide reads, in one-letter code: Cytochrome b (380 aa).

A run of 4 helical transmembrane segments spans residues 34 to 54 (FGSL…LLAM), 78 to 99 (WLIR…FLHI), 114 to 134 (WNTG…GYVL), and 179 to 199 (FFAL…IHLT). The heme b site is built by His-84 and His-98. Residues His-183 and His-197 each contribute to the heme b site. His-202 contacts a ubiquinone. 4 consecutive transmembrane segments (helical) span residues 227–247 (LKDI…ALFS), 289–309 (LGGV…PFLH), 321–341 (LSQI…WIGS), and 348–368 (FIII…ILFP).

It belongs to the cytochrome b family. As to quaternary structure, the cytochrome bc1 complex contains 11 subunits: 3 respiratory subunits (MT-CYB, CYC1 and UQCRFS1), 2 core proteins (UQCRC1 and UQCRC2) and 6 low-molecular weight proteins (UQCRH/QCR6, UQCRB/QCR7, UQCRQ/QCR8, UQCR10/QCR9, UQCR11/QCR10 and a cleavage product of UQCRFS1). This cytochrome bc1 complex then forms a dimer. It depends on heme b as a cofactor.

It localises to the mitochondrion inner membrane. In terms of biological role, component of the ubiquinol-cytochrome c reductase complex (complex III or cytochrome b-c1 complex) that is part of the mitochondrial respiratory chain. The b-c1 complex mediates electron transfer from ubiquinol to cytochrome c. Contributes to the generation of a proton gradient across the mitochondrial membrane that is then used for ATP synthesis. In Pavo muticus (Green peafowl), this protein is Cytochrome b (MT-CYB).